Consider the following 505-residue polypeptide: Cytochrome P450 9b1 (505 aa).

Cys449 contacts heme.

It belongs to the cytochrome P450 family. It depends on heme as a cofactor.

It is found in the endoplasmic reticulum membrane. It localises to the microsome membrane. In terms of biological role, may be involved in the metabolism of insect hormones and in the breakdown of synthetic insecticides. The chain is Cytochrome P450 9b1 (Cyp9b1) from Drosophila melanogaster (Fruit fly).